The primary structure comprises 439 residues: Sodium-dependent phosphate transport protein 3 (439 aa).

Residues Asn-47, Asn-56, Asn-68, and Asn-69 are each glycosylated (N-linked (GlcNAc...) asparagine). A run of 9 helical transmembrane segments spans residues 98–118 (INYGIILTLIPSGYLAGIFGA), 130–150 (SLLTLFTPLAADFGVILVIMV), 183–203 (TIAGSGSAFGSFIILCVGGLI), 211–231 (FIFYIFGSTGCVCCLLWFTVI), 273–293 (LPLWAIFLGFFSHFWLCTIIL), 317–337 (LPFIAAASCTILGGQLADFLL), 350–369 (LFSSLGLLLPSICAVALPFV), 374–396 (VITIILLILIPGTSNLCDSGFII), and 415–435 (GFGLIAGIISSTATGFLISQV).

Belongs to the major facilitator superfamily. Sodium/anion cotransporter family. Expressed in the small intestine, kidney, spleen and testis. Not detected in fetal brain, bone marrow, and mammary gland.

Its subcellular location is the apical cell membrane. It catalyses the reaction 3 Na(+)(out) + phosphate(out) = 3 Na(+)(in) + phosphate(in). The enzyme catalyses urate(out) + n chloride(in) = urate(in) + n chloride(out). Acts as a membrane potential-dependent organic anion transporter, the transport requires a low concentration of chloride ions. Mediates chloride-dependent transport of urate. Can actively transport inorganic phosphate into cells via Na(+) cotransport. This Homo sapiens (Human) protein is Sodium-dependent phosphate transport protein 3 (SLC17A2).